We begin with the raw amino-acid sequence, 561 residues long: Carbohydrate sulfotransferase 15 (561 aa).

Residues 1–80 (MRHCINCCIQ…FLRFRKGKRC (80 aa)) lie on the Cytoplasmic side of the membrane. A helical; Signal-anchor for type II membrane protein membrane pass occupies residues 81–101 (SLVFGLIIMTLVMASYILSGA). At 102–561 (HQELLISSPF…DDEAFAWKTT (460 aa)) the chain is on the lumenal side. 263–267 (KCGTT) is a 3'-phosphoadenylyl sulfate binding site. Asn364 carries N-linked (GlcNAc...) asparagine glycosylation. Arg392 and Ser400 together coordinate 3'-phosphoadenylyl sulfate.

Belongs to the sulfotransferase 1 family. In terms of assembly, homodimer; disulfide-linked (Potential). The relevance of homodimerization is however unsure. May interact with phosphorylated proteins in resting B-cells, including HCK. A divalent metal cation is required as a cofactor. Glutathione serves as cofactor. In terms of processing, glycosylated.

The protein resides in the golgi apparatus membrane. The catalysed reaction is dermatan 4'-sulfate + n 3'-phosphoadenylyl sulfate = dermatan 4',6'-bissulfate + n adenosine 3',5'-bisphosphate + n H(+). The enzyme catalyses chondroitin 4'-sulfate + n 3'-phosphoadenylyl sulfate = chondroitin 4',6'-bissulfate + n adenosine 3',5'-bisphosphate + n H(+). Inhibited by phenyl beta-GalNAc(4,6-SO(4)). Sulfotransferase that transfers sulfate from 3'-phosphoadenosine 5'-phosphosulfate (PAPS) to the C-6 hydroxyl group of the GalNAc 4-sulfate residue of chondroitin sulfate A and forms chondroitin sulfate E containing GlcA-GalNAc(4,6-SO(4)) repeating units. It also transfers sulfate to a unique non-reducing terminal sequence, GalNAc(4SO4)-GlcA(2SO4)-GalNAc(6SO4), to yield a highly sulfated structure similar to the structure found in thrombomodulin chondroitin sulfate. May also act as a B-cell receptor involved in BCR ligation-mediated early activation that mediate regulatory signals key to B-cell development and/or regulation of B-cell-specific RAG expression; however such results are unclear in vivo. This is Carbohydrate sulfotransferase 15 (Chst15) from Rattus norvegicus (Rat).